Consider the following 218-residue polypeptide: Peptide methionine sulfoxide reductase MsrA (218 aa).

Cysteine 57 is an active-site residue.

Belongs to the MsrA Met sulfoxide reductase family.

It catalyses the reaction L-methionyl-[protein] + [thioredoxin]-disulfide + H2O = L-methionyl-(S)-S-oxide-[protein] + [thioredoxin]-dithiol. The catalysed reaction is [thioredoxin]-disulfide + L-methionine + H2O = L-methionine (S)-S-oxide + [thioredoxin]-dithiol. Functionally, has an important function as a repair enzyme for proteins that have been inactivated by oxidation. Catalyzes the reversible oxidation-reduction of methionine sulfoxide in proteins to methionine. This Brucella melitensis biotype 1 (strain ATCC 23456 / CCUG 17765 / NCTC 10094 / 16M) protein is Peptide methionine sulfoxide reductase MsrA.